The primary structure comprises 200 residues: dITP/XTP pyrophosphatase (200 aa).

7 to 12 (TQNKRK) provides a ligand contact to substrate. Residues E42 and D71 each coordinate Mg(2+). D71 serves as the catalytic Proton acceptor. Substrate is bound by residues S72, 156 to 159 (FGYD), K179, and 184 to 185 (HR).

Belongs to the HAM1 NTPase family. In terms of assembly, homodimer. Mg(2+) serves as cofactor.

It carries out the reaction XTP + H2O = XMP + diphosphate + H(+). The enzyme catalyses dITP + H2O = dIMP + diphosphate + H(+). It catalyses the reaction ITP + H2O = IMP + diphosphate + H(+). Pyrophosphatase that catalyzes the hydrolysis of nucleoside triphosphates to their monophosphate derivatives, with a high preference for the non-canonical purine nucleotides XTP (xanthosine triphosphate), dITP (deoxyinosine triphosphate) and ITP. Seems to function as a house-cleaning enzyme that removes non-canonical purine nucleotides from the nucleotide pool, thus preventing their incorporation into DNA/RNA and avoiding chromosomal lesions. The protein is dITP/XTP pyrophosphatase of Malacoplasma penetrans (strain HF-2) (Mycoplasma penetrans).